Reading from the N-terminus, the 380-residue chain is Cytochrome b (380 aa).

4 helical membrane-spanning segments follow: residues 34–54 (FGSLLGICLTTQILTGLLLAA), 78–99 (WLIRNLHANGASFFFICIYMHI), 114–134 (WNTGVILLLTLMATAFVGYVL), and 179–199 (FFTLHFLLPFMIMGLTLIHLT). Residues H84 and H98 each coordinate heme b. Residues H183 and H197 each coordinate heme b. H202 is a binding site for a ubiquinone. Helical transmembrane passes span 227-247 (LKDTLGFMLMFLPLMTLALFS), 289-309 (LGGVLALAASMLILFLAPLLH), 321-341 (LSQLLFWTLTANLLILTWVGS), and 348-368 (FIIIGQLASLTYFTILLILFP).

It belongs to the cytochrome b family. The cytochrome bc1 complex contains 11 subunits: 3 respiratory subunits (MT-CYB, CYC1 and UQCRFS1), 2 core proteins (UQCRC1 and UQCRC2) and 6 low-molecular weight proteins (UQCRH/QCR6, UQCRB/QCR7, UQCRQ/QCR8, UQCR10/QCR9, UQCR11/QCR10 and a cleavage product of UQCRFS1). This cytochrome bc1 complex then forms a dimer. Heme b serves as cofactor.

Its subcellular location is the mitochondrion inner membrane. Functionally, component of the ubiquinol-cytochrome c reductase complex (complex III or cytochrome b-c1 complex) that is part of the mitochondrial respiratory chain. The b-c1 complex mediates electron transfer from ubiquinol to cytochrome c. Contributes to the generation of a proton gradient across the mitochondrial membrane that is then used for ATP synthesis. This is Cytochrome b (MT-CYB) from Balearica regulorum (Grey crowned-crane).